We begin with the raw amino-acid sequence, 426 residues long: Phosphoribosylamine--glycine ligase (426 aa).

The ATP-grasp domain occupies 113–320; it reads KSLMTEAKIP…LLELLYRAST (208 aa). An ATP-binding site is contributed by 139–200; that stretch reads LESKSIPIVI…EEFMEGQEAS (62 aa). 2 residues coordinate Mg(2+): Glu-290 and Asn-292.

The protein belongs to the GARS family. Mg(2+) is required as a cofactor. The cofactor is Mn(2+).

It catalyses the reaction 5-phospho-beta-D-ribosylamine + glycine + ATP = N(1)-(5-phospho-beta-D-ribosyl)glycinamide + ADP + phosphate + H(+). It participates in purine metabolism; IMP biosynthesis via de novo pathway; N(1)-(5-phospho-D-ribosyl)glycinamide from 5-phospho-alpha-D-ribose 1-diphosphate: step 2/2. In Leptospira interrogans serogroup Icterohaemorrhagiae serovar copenhageni (strain Fiocruz L1-130), this protein is Phosphoribosylamine--glycine ligase.